A 263-amino-acid polypeptide reads, in one-letter code: Tryptophan synthase alpha chain (263 aa).

Residues Glu49 and Asp60 each act as proton acceptor in the active site.

Belongs to the TrpA family. As to quaternary structure, tetramer of two alpha and two beta chains.

It carries out the reaction (1S,2R)-1-C-(indol-3-yl)glycerol 3-phosphate + L-serine = D-glyceraldehyde 3-phosphate + L-tryptophan + H2O. It functions in the pathway amino-acid biosynthesis; L-tryptophan biosynthesis; L-tryptophan from chorismate: step 5/5. Functionally, the alpha subunit is responsible for the aldol cleavage of indoleglycerol phosphate to indole and glyceraldehyde 3-phosphate. The polypeptide is Tryptophan synthase alpha chain (Roseobacter denitrificans (strain ATCC 33942 / OCh 114) (Erythrobacter sp. (strain OCh 114))).